The sequence spans 201 residues: CASP-like protein 1E1 (201 aa).

Topologically, residues 1–36 are cytoplasmic; the sequence is MESQFRPGFDVSQGAGGRASKFGDVVAPTSSTQLPG. A helical membrane pass occupies residues 37 to 57; it reads IILRIVAIVLTFISAVVMGAA. Over 58–87 the chain is Extracellular; it reads RQTTTVTGIDAETALLTSITVTVKSTYSAA. The helical transmembrane segment at 88-108 threads the bilayer; the sequence is YVYFVVANVLVFFYSVVSLVL. Over 109 to 127 the chain is Cytoplasmic; the sequence is SMVNKARLTSMSLPFSIAD. Residues 128–148 form a helical membrane-spanning segment; the sequence is LLMVVLLFSSNGAAAAISVVA. The Extracellular segment spans residues 149 to 173; the sequence is EKGQQNLAGWDKICNLFGGLCARVN. Residues 174–194 form a helical membrane-spanning segment; sequence AAIVLSMLASVAYVILVVFGM. The Cytoplasmic portion of the chain corresponds to 195 to 201; sequence ANLRRSQ.

Belongs to the Casparian strip membrane proteins (CASP) family. Homodimer and heterodimers.

Its subcellular location is the cell membrane. The polypeptide is CASP-like protein 1E1 (Musa acuminata (Banana)).